A 101-amino-acid polypeptide reads, in one-letter code: Cilia- and flagella-associated protein 141 (101 aa).

As to quaternary structure, microtubule inner protein component of sperm flagellar doublet microtubules. As to expression, expressed in trachea multiciliated cells.

Its subcellular location is the cytoplasm. It localises to the cytoskeleton. The protein resides in the cilium axoneme. It is found in the flagellum axoneme. Functionally, microtubule inner protein (MIP) part of the dynein-decorated doublet microtubules (DMTs) in cilia axoneme, which is required for motile cilia beating. The protein is Cilia- and flagella-associated protein 141 of Bos taurus (Bovine).